The chain runs to 357 residues: DNA replication and repair protein RecF (357 aa).

An ATP-binding site is contributed by 30 to 37 (GANGSGKT).

Belongs to the RecF family.

It localises to the cytoplasm. The RecF protein is involved in DNA metabolism; it is required for DNA replication and normal SOS inducibility. RecF binds preferentially to single-stranded, linear DNA. It also seems to bind ATP. The protein is DNA replication and repair protein RecF of Salmonella agona (strain SL483).